We begin with the raw amino-acid sequence, 76 residues long: MSYQEQQCKQPCQPPPVCPPPKCPEPCSPSVCPEPCPPPKCPEPCPEPCPPPSFQQKCPPVQPPPPCQQKCPPKSK.

3 repeat units span residues 21–29 (PKCPEPCSP), 30–38 (SVCPEPCPP), and 39–47 (PKCPEPCPE). The segment at 21–47 (PKCPEPCSPSVCPEPCPPPKCPEPCPE) is 3 X 9 AA approximate tandem repeats. Residues 53 to 76 (SFQQKCPPVQPPPPCQQKCPPKSK) are disordered.

The protein belongs to the cornifin (SPRR) family. In terms of tissue distribution, expressed in uterus.

The protein resides in the cytoplasm. Its function is as follows. Cross-linked envelope protein of keratinocytes. It is a keratinocyte protein that first appears in the cell cytosol, but ultimately becomes cross-linked to membrane proteins by transglutaminase. All that results in the formation of an insoluble envelope beneath the plasma membrane. In Mus musculus (Mouse), this protein is Small proline-rich protein 2F (Sprr2f).